The primary structure comprises 206 residues: MVKPSLEFALNEPNRYYDRHFERSAVKILPGEYFATRENTMIVTVLGSCVAVCLYDPVLKIGGMNHFLLPNDNVTAPNMMTESARYGVFAMELLINHVLKLGARRNALEAKVFGGGNVLRGLTVQNIGERNAEFVLDYLQMEQIPVIAADLLDIYPRKVYFFPETGLVKVRKIKTIHNSTIMDRESEYRLRIKNLPSGGDVELFGE.

It belongs to the CheD family.

It catalyses the reaction L-glutaminyl-[protein] + H2O = L-glutamyl-[protein] + NH4(+). Functionally, probably deamidates glutamine residues to glutamate on methyl-accepting chemotaxis receptors (MCPs), playing an important role in chemotaxis. This is Probable chemoreceptor glutamine deamidase CheD 1 from Shewanella oneidensis (strain ATCC 700550 / JCM 31522 / CIP 106686 / LMG 19005 / NCIMB 14063 / MR-1).